The chain runs to 152 residues: Large ribosomal subunit protein uL13 (152 aa).

It belongs to the universal ribosomal protein uL13 family. As to quaternary structure, part of the 50S ribosomal subunit.

This protein is one of the early assembly proteins of the 50S ribosomal subunit, although it is not seen to bind rRNA by itself. It is important during the early stages of 50S assembly. This is Large ribosomal subunit protein uL13 from Borreliella afzelii (strain PKo) (Borrelia afzelii).